A 314-amino-acid polypeptide reads, in one-letter code: Cytochrome c biogenesis protein CcsA (314 aa).

8 consecutive transmembrane segments (helical) span residues 15–35 (VSFIGILIFYFLLINLPISLI), 48–68 (LITILINLFIALQLISRWIIS), 73–93 (ISNLYESLYFLVWGITLGQLL), 102–122 (IIPAIAIPIELLTIAFACFVL), 148–168 (VMLSYAALIMGSLLSASVLFI), 216–236 (SILVGFVLLTLGLITGAIWAN), 250–267 (TWAFISWLFYAAYLHMRI), and 277–297 (ALLATSGFFVVLICYIGVNFL).

It belongs to the CcmF/CycK/Ccl1/NrfE/CcsA family. In terms of assembly, may interact with ccs1.

The protein localises to the cellular thylakoid membrane. Its function is as follows. Required during biogenesis of c-type cytochromes (cytochrome c6 and cytochrome f) at the step of heme attachment. The sequence is that of Cytochrome c biogenesis protein CcsA from Prochlorococcus marinus subsp. pastoris (strain CCMP1986 / NIES-2087 / MED4).